A 1458-amino-acid polypeptide reads, in one-letter code: ABC multidrug transporter B (1458 aa).

Helical transmembrane passes span 30–50, 70–90, 102–122, 128–148, and 165–185; these read FSLL…VLII, LLWA…VLAV, ASIA…LLSC, STTP…FDIA, and IAIL…LEAV. The N-linked (GlcNAc...) asparagine glycan is linked to N208. The chain crosses the membrane as a helical span at residues 273-295; that stretch reads WPLLSAVPPRACLAALNFCQPLL. An ABC transmembrane type-1 1 domain is found at 283–561; the sequence is ACLAALNFCQ…LVMALMTFVG (279 aa). An N-linked (GlcNAc...) asparagine glycan is attached at N309. 5 helical membrane-spanning segments follow: residues 314–334, 387–407, 411–431, 501–521, and 541–561; these read IGYG…VTMG, WQTI…IYLL, LGVA…GCLI, LGWT…YGIM, and LFAL…TFVG. The 228-residue stretch at 626-853 folds into the ABC transporter 1 domain; sequence LTVKNATFAW…AGGYVSSFGL (228 aa). N630 carries an N-linked (GlcNAc...) asparagine glycan. An ATP-binding site is contributed by 660–667; that stretch reads GPSGCGKS. N-linked (GlcNAc...) asparagine glycosylation is found at N702, N804, and N879. One can recognise an ABC transmembrane type-1 2 domain in the interval 933–1182; that stretch reads PNGRTGYYLG…LVTFWTNLET (250 aa). 6 helical membrane-spanning segments follow: residues 940–960, 978–998, 1016–1036, 1040–1060, 1125–1145, and 1156–1176; these read YLGI…IGCW, LLAT…SGSI, AAIN…LMGI, YAAI…KVYL, LTLT…VLVV, and VGVA…LVTF. The 231-residue stretch at 1219-1449 folds into the ABC transporter 2 domain; the sequence is IEFKSVSAEY…EGSYFSRLYA (231 aa). 1252–1259 is an ATP binding site; the sequence is GRTGSGKT. Residue N1316 is glycosylated (N-linked (GlcNAc...) asparagine).

It belongs to the ABC transporter superfamily. ABCC family. Conjugate transporter (TC 3.A.1.208) subfamily.

Its subcellular location is the cell membrane. Pleiotropic ABC efflux transporter that may be involved in A.fumigatus adaptation to azoles such as vorizonazole. The polypeptide is ABC multidrug transporter B (Aspergillus fumigatus (strain ATCC MYA-4609 / CBS 101355 / FGSC A1100 / Af293) (Neosartorya fumigata)).